We begin with the raw amino-acid sequence, 554 residues long: DNA ligase (554 aa).

Glu-253 provides a ligand contact to ATP. Catalysis depends on Lys-255, which acts as the N6-AMP-lysine intermediate. Arg-260, Arg-275, Glu-304, Phe-344, Arg-418, and Lys-424 together coordinate ATP.

The protein belongs to the ATP-dependent DNA ligase family. Mg(2+) is required as a cofactor.

The catalysed reaction is ATP + (deoxyribonucleotide)n-3'-hydroxyl + 5'-phospho-(deoxyribonucleotide)m = (deoxyribonucleotide)n+m + AMP + diphosphate.. DNA ligase that seals nicks in double-stranded DNA during DNA replication, DNA recombination and DNA repair. This chain is DNA ligase, found in Haloarcula marismortui (strain ATCC 43049 / DSM 3752 / JCM 8966 / VKM B-1809) (Halobacterium marismortui).